The following is a 709-amino-acid chain: Putative extracellular sulfatase Sulf-1 homolog (709 aa).

An N-terminal signal peptide occupies residues 1 to 27; it reads MISNLRISNYFIIFYVLFLIIPIKVTS. Ca(2+) contacts are provided by Asp43, Asp44, and Cys79. Cys79 acts as the Nucleophile in catalysis. The residue at position 79 (Cys79) is a 3-oxoalanine (Cys). Asn103, Asn162, and Asn189 each carry an N-linked (GlcNAc...) asparagine glycan. Residues Asp308 and His309 each coordinate Ca(2+). N-linked (GlcNAc...) asparagine glycans are attached at residues Asn344, Asn468, Asn500, Asn540, Asn566, Asn610, and Asn620.

This sequence belongs to the sulfatase family. It depends on Ca(2+) as a cofactor. In terms of processing, the conversion to 3-oxoalanine (also known as C-formylglycine, FGly), of a serine or cysteine residue in prokaryotes and of a cysteine residue in eukaryotes, is critical for catalytic activity.

The protein localises to the endoplasmic reticulum. It is found in the golgi apparatus. It localises to the golgi stack. The protein resides in the cell surface. This Caenorhabditis elegans protein is Putative extracellular sulfatase Sulf-1 homolog (sul-1).